A 333-amino-acid polypeptide reads, in one-letter code: Mitochondrial glycine transporter (333 aa).

The tract at residues 1 to 25 is disordered; it reads MTNAATDKSVASVARDVSTGKPGKS. Solcar repeat units lie at residues 26–109, 127–220, and 236–319; these read PDAA…MRAA, LLPM…FKND, and RSSV…LIKS. The next 6 membrane-spanning stretches (helical) occupy residues 32-57, 84-110, 133-158, 195-218, 240-266, and 294-312; these read LLSG…TRLQ, GAVP…RAAV, LATG…TRFE, GSVA…EGFK, INSS…KTRL, and GLSL…SWCI.

It belongs to the mitochondrial carrier (TC 2.A.29) family. SLC25A38 subfamily.

It localises to the mitochondrion inner membrane. It carries out the reaction glycine(in) = glycine(out). Mitochondrial glycine transporter that imports glycine into the mitochondrial matrix. Plays an important role in providing glycine for the first enzymatic step in heme biosynthesis, the condensation of glycine with succinyl-CoA to produce 5-aminolevulinate (ALA) in the mitochondrial matrix. The chain is Mitochondrial glycine transporter from Scheffersomyces stipitis (strain ATCC 58785 / CBS 6054 / NBRC 10063 / NRRL Y-11545) (Yeast).